A 250-amino-acid polypeptide reads, in one-letter code: Pyrroloquinoline-quinone synthase (250 aa).

This sequence belongs to the PqqC family.

It carries out the reaction 6-(2-amino-2-carboxyethyl)-7,8-dioxo-1,2,3,4,7,8-hexahydroquinoline-2,4-dicarboxylate + 3 O2 = pyrroloquinoline quinone + 2 H2O2 + 2 H2O + H(+). The protein operates within cofactor biosynthesis; pyrroloquinoline quinone biosynthesis. In terms of biological role, ring cyclization and eight-electron oxidation of 3a-(2-amino-2-carboxyethyl)-4,5-dioxo-4,5,6,7,8,9-hexahydroquinoline-7,9-dicarboxylic-acid to PQQ. The sequence is that of Pyrroloquinoline-quinone synthase from Xanthomonas campestris pv. campestris (strain B100).